The primary structure comprises 493 residues: uncharacterized protein (493 aa).

Position 8-37 (8-37 (DFLVVGGGTCGCVVAARLSEDPSATVMLLE)) interacts with FAD. His-429 functions as the Proton acceptor in the catalytic mechanism.

Belongs to the GMC oxidoreductase family. Requires FAD as cofactor.

This is an uncharacterized protein from Rhodococcus erythropolis (Arthrobacter picolinophilus).